The chain runs to 416 residues: GTPase Obg (416 aa).

The Obg domain maps to 1–157 (MFQDVLVITV…RRLRLELMLI (157 aa)). Disordered regions lie at residues 25–44 (EKFV…GGSV) and 62–82 (TYKA…RGGE). Gly residues predominate over residues 32–42 (GPDGGDGGRGG). The span at 63 to 72 (YKAEDGEHGR) shows a compositional bias: basic and acidic residues. The OBG-type G domain maps to 158-324 (ADVGLVGYPN…LKEALHALVR (167 aa)). Residues 164–171 (GYPNAGKS), 189–193 (FTTLS), 211–214 (DIPG), 277–280 (NKVD), and 305–307 (SAL) contribute to the GTP site. Residues serine 171 and threonine 191 each coordinate Mg(2+). One can recognise an OCT domain in the interval 336–414 (PRKEVQAGVE…IGGLEFEYIP (79 aa)).

Belongs to the TRAFAC class OBG-HflX-like GTPase superfamily. OBG GTPase family. As to quaternary structure, monomer. Mg(2+) serves as cofactor.

Its subcellular location is the cytoplasm. Its function is as follows. An essential GTPase which binds GTP, GDP and possibly (p)ppGpp with moderate affinity, with high nucleotide exchange rates and a fairly low GTP hydrolysis rate. Plays a role in control of the cell cycle, stress response, ribosome biogenesis and in those bacteria that undergo differentiation, in morphogenesis control. The protein is GTPase Obg of Thermus thermophilus (strain ATCC 27634 / DSM 579 / HB8).